The sequence spans 560 residues: Membrane protein insertase YidC (560 aa).

Transmembrane regions (helical) follow at residues 5–25, 334–354, 357–377, 431–451, 476–496, and 522–542; these read IINL…WQYF, AIDF…MNFF, YVGN…LLMF, LPIL…YVTI, LFGL…WPIL, and FMPL…LIYW.

It belongs to the OXA1/ALB3/YidC family. Type 1 subfamily. As to quaternary structure, interacts with the Sec translocase complex via SecD. Specifically interacts with transmembrane segments of nascent integral membrane proteins during membrane integration.

The protein resides in the cell inner membrane. Its function is as follows. Required for the insertion and/or proper folding and/or complex formation of integral membrane proteins into the membrane. Involved in integration of membrane proteins that insert both dependently and independently of the Sec translocase complex, as well as at least some lipoproteins. Aids folding of multispanning membrane proteins. This Rickettsia rickettsii (strain Sheila Smith) protein is Membrane protein insertase YidC.